A 626-amino-acid polypeptide reads, in one-letter code: Division abnormally delayed protein (626 aa).

An N-terminal signal peptide occupies residues 1-26 (MAARSVRLAQLLLFTLLCGFVGLSAA). The segment covering 41–52 (LHSATTHHRRRL) has biased composition (basic residues). The disordered stretch occupies residues 41 to 65 (LHSATTHHRRRLQRDSRAKDAVGGS). N-linked (GlcNAc...) asparagine; atypical glycosylation is present at Asn97. N-linked (GlcNAc...) asparagine glycans are attached at residues Asn101, Asn150, and Asn187. The tract at residues 533-607 (NSIQATHDIQ…GKTSGSNPLE (75 aa)) is disordered. O-linked (Xyl...) (heparan sulfate) serine glycans are attached at residues Ser549, Ser569, Ser573, and Ser601. Residues 565-575 (GAHGSGDGSGD) are compositionally biased toward gly residues. Gly602 carries GPI-anchor amidated glycine lipidation. Residues 603–626 (SNPLEGTATWMLLTLVTMLFSSCS) constitute a propeptide, removed in mature form.

It belongs to the glypican family. Interacts with nord; the interaction promotes dally degradation. Interacts with Magu. As part of the dally/ Magu complex, associates with fwe (isoforms ubi, LoseA and LoseB) and is unable to interact with fwe independently of Magu.

The protein localises to the cell membrane. Its function is as follows. Cell surface proteoglycan that bears heparan sulfate. Functions as a coreceptor for growth factors and morphogens, such as the products of dpp, to regulate signaling and distribution of these ligands. Required for cell division patterning during postembryonic development of the nervous system. Plays a role in dpp/BMP signaling possibly by stabilizing dpp and thereby creating a morphological gradient during wing development. Might have a role in testis development. Functions with magu and fwe in a mechanism of scaling, which utilises apoptosis to ensure that the dpp patterning gradient remains proportional to the size of the growing wing. In this mechanism, fwe represses dally and Magu-dependent activity in expanding the gradient, and dally/Magu inhibits fwe-dependent apoptosis to keep cell death rate low. When the levels of these different proteins are optimally regulated the gradient correctly scales with organ growth but when this fails, fwe-mediated apoptosis is activated to trim the developing tissue to match the correct size of the gradient. In Drosophila melanogaster (Fruit fly), this protein is Division abnormally delayed protein (dally).